Here is a 570-residue protein sequence, read N- to C-terminus: Glutamate--tRNA ligase (570 aa).

The short motif at 107–117 is the 'HIGH' region element; sequence PNPDFVLHLGS.

The protein belongs to the class-I aminoacyl-tRNA synthetase family. Glutamate--tRNA ligase type 2 subfamily.

It localises to the cytoplasm. The enzyme catalyses tRNA(Glu) + L-glutamate + ATP = L-glutamyl-tRNA(Glu) + AMP + diphosphate. Catalyzes the attachment of glutamate to tRNA(Glu) in a two-step reaction: glutamate is first activated by ATP to form Glu-AMP and then transferred to the acceptor end of tRNA(Glu). In Pyrobaculum aerophilum (strain ATCC 51768 / DSM 7523 / JCM 9630 / CIP 104966 / NBRC 100827 / IM2), this protein is Glutamate--tRNA ligase.